We begin with the raw amino-acid sequence, 334 residues long: Ornithine carbamoyltransferase (334 aa).

Carbamoyl phosphate-binding positions include 57–60 (STRT), glutamine 84, arginine 108, and 135–138 (HPTQ). L-ornithine is bound by residues asparagine 169, aspartate 233, and 237–238 (SM). Residues 275–276 (CL) and arginine 320 contribute to the carbamoyl phosphate site.

Belongs to the aspartate/ornithine carbamoyltransferase superfamily. OTCase family.

The protein resides in the cytoplasm. It carries out the reaction carbamoyl phosphate + L-ornithine = L-citrulline + phosphate + H(+). The protein operates within amino-acid biosynthesis; L-arginine biosynthesis; L-arginine from L-ornithine and carbamoyl phosphate: step 1/3. Functionally, reversibly catalyzes the transfer of the carbamoyl group from carbamoyl phosphate (CP) to the N(epsilon) atom of ornithine (ORN) to produce L-citrulline. The chain is Ornithine carbamoyltransferase from Aeromonas hydrophila subsp. hydrophila (strain ATCC 7966 / DSM 30187 / BCRC 13018 / CCUG 14551 / JCM 1027 / KCTC 2358 / NCIMB 9240 / NCTC 8049).